Reading from the N-terminus, the 185-residue chain is Large ribosomal subunit protein uL5 (185 aa).

Belongs to the universal ribosomal protein uL5 family. Part of the 50S ribosomal subunit; part of the 5S rRNA/L5/L18/L25 subcomplex. Contacts the 5S rRNA and the P site tRNA. Forms a bridge to the 30S subunit in the 70S ribosome.

Its function is as follows. This is one of the proteins that bind and probably mediate the attachment of the 5S RNA into the large ribosomal subunit, where it forms part of the central protuberance. In the 70S ribosome it contacts protein S13 of the 30S subunit (bridge B1b), connecting the 2 subunits; this bridge is implicated in subunit movement. Contacts the P site tRNA; the 5S rRNA and some of its associated proteins might help stabilize positioning of ribosome-bound tRNAs. The sequence is that of Large ribosomal subunit protein uL5 from Brucella abortus (strain S19).